The following is a 660-amino-acid chain: UvrABC system protein B (660 aa).

One can recognise a Helicase ATP-binding domain in the interval 24–177 (KGFKEGNQFE…DDLARALIDL (154 aa)). Residue 37–44 (GVTGSGKT) coordinates ATP. The Beta-hairpin motif lies at 90–113 (YYDYYQPEAYVPQSDTYIAKDSSV). One can recognise a Helicase C-terminal domain in the interval 428 to 594 (QIDDLVSEVN…TIQKSVRDLI (167 aa)). Residues 620 to 655 (EKHIADIEKKMKKAAAELNFEAAAEYRDKLIMLKNT) enclose the UVR domain.

The protein belongs to the UvrB family. As to quaternary structure, forms a heterotetramer with UvrA during the search for lesions. Interacts with UvrC in an incision complex.

Its subcellular location is the cytoplasm. The UvrABC repair system catalyzes the recognition and processing of DNA lesions. A damage recognition complex composed of 2 UvrA and 2 UvrB subunits scans DNA for abnormalities. Upon binding of the UvrA(2)B(2) complex to a putative damaged site, the DNA wraps around one UvrB monomer. DNA wrap is dependent on ATP binding by UvrB and probably causes local melting of the DNA helix, facilitating insertion of UvrB beta-hairpin between the DNA strands. Then UvrB probes one DNA strand for the presence of a lesion. If a lesion is found the UvrA subunits dissociate and the UvrB-DNA preincision complex is formed. This complex is subsequently bound by UvrC and the second UvrB is released. If no lesion is found, the DNA wraps around the other UvrB subunit that will check the other stand for damage. In Agathobacter rectalis (strain ATCC 33656 / DSM 3377 / JCM 17463 / KCTC 5835 / VPI 0990) (Eubacterium rectale), this protein is UvrABC system protein B.